Consider the following 84-residue polypeptide: Putative glutaredoxin MT3292 (84 aa).

A Glutaredoxin domain is found at 1–84 (MITAALTIYT…VKAKLVKIAG (84 aa)).

This is Putative glutaredoxin MT3292 from Mycobacterium tuberculosis (strain CDC 1551 / Oshkosh).